Reading from the N-terminus, the 354-residue chain is D-alanine--D-alanine ligase (354 aa).

The ATP-grasp domain maps to 133–338 (KHLFAQAGLP…YSDLIEQLVE (206 aa)). 166–221 (EKELGYPCFVKPANLGSSVGISKCRNREELEKAFELAFEYDRKIVVEEGIAGREIE) lines the ATP pocket. Positions 292, 305, and 307 each coordinate Mg(2+).

The protein belongs to the D-alanine--D-alanine ligase family. Mg(2+) is required as a cofactor. Requires Mn(2+) as cofactor.

The protein localises to the cytoplasm. It carries out the reaction 2 D-alanine + ATP = D-alanyl-D-alanine + ADP + phosphate + H(+). It participates in cell wall biogenesis; peptidoglycan biosynthesis. Its function is as follows. Cell wall formation. In Bacillus velezensis (strain DSM 23117 / BGSC 10A6 / LMG 26770 / FZB42) (Bacillus amyloliquefaciens subsp. plantarum), this protein is D-alanine--D-alanine ligase.